Consider the following 37-residue polypeptide: Large ribosomal subunit protein bL36 (37 aa).

Belongs to the bacterial ribosomal protein bL36 family.

In Helicobacter pylori (strain ATCC 700392 / 26695) (Campylobacter pylori), this protein is Large ribosomal subunit protein bL36.